The chain runs to 150 residues: D-aminoacyl-tRNA deacylase (150 aa).

A Gly-cisPro motif, important for rejection of L-amino acids motif is present at residues 137-138; that stretch reads GP.

The protein belongs to the DTD family. As to quaternary structure, homodimer.

It localises to the cytoplasm. It catalyses the reaction glycyl-tRNA(Ala) + H2O = tRNA(Ala) + glycine + H(+). It carries out the reaction a D-aminoacyl-tRNA + H2O = a tRNA + a D-alpha-amino acid + H(+). Its function is as follows. An aminoacyl-tRNA editing enzyme that deacylates mischarged D-aminoacyl-tRNAs. Also deacylates mischarged glycyl-tRNA(Ala), protecting cells against glycine mischarging by AlaRS. Acts via tRNA-based rather than protein-based catalysis; rejects L-amino acids rather than detecting D-amino acids in the active site. By recycling D-aminoacyl-tRNA to D-amino acids and free tRNA molecules, this enzyme counteracts the toxicity associated with the formation of D-aminoacyl-tRNA entities in vivo and helps enforce protein L-homochirality. The sequence is that of D-aminoacyl-tRNA deacylase from Heliobacterium modesticaldum (strain ATCC 51547 / Ice1).